The following is a 527-amino-acid chain: uncharacterized protein (527 aa).

This is an uncharacterized protein from Schizosaccharomyces pombe (strain 972 / ATCC 24843) (Fission yeast).